Consider the following 397-residue polypeptide: Elongation factor Tu (397 aa).

The tr-type G domain maps to 10–207 (KPHLNIGTIG…AVDAYIPEPE (198 aa)). A G1 region spans residues 19 to 26 (GHVDHGKT). Residue 19-26 (GHVDHGKT) participates in GTP binding. T26 serves as a coordination point for Mg(2+). The G2 stretch occupies residues 60 to 64 (GVTIN). The segment at 81-84 (DCPG) is G3. GTP-binding positions include 81-85 (DCPGH) and 136-139 (NKVD). The tract at residues 136–139 (NKVD) is G4. Residues 174–176 (SAL) are G5.

This sequence belongs to the TRAFAC class translation factor GTPase superfamily. Classic translation factor GTPase family. EF-Tu/EF-1A subfamily. As to quaternary structure, monomer.

The protein localises to the cytoplasm. The catalysed reaction is GTP + H2O = GDP + phosphate + H(+). Functionally, GTP hydrolase that promotes the GTP-dependent binding of aminoacyl-tRNA to the A-site of ribosomes during protein biosynthesis. This chain is Elongation factor Tu, found in Syntrophus aciditrophicus (strain SB).